The following is a 185-amino-acid chain: V-type proton ATPase subunit E (185 aa).

Belongs to the V-ATPase E subunit family.

Functionally, produces ATP from ADP in the presence of a proton gradient across the membrane. This is V-type proton ATPase subunit E from Deinococcus deserti (strain DSM 17065 / CIP 109153 / LMG 22923 / VCD115).